The chain runs to 398 residues: Cobalamin import ATP-binding protein BtuD (398 aa).

Residues 3 to 237 (LDVTGLDVEL…DTIRAAFDAR (235 aa)) form the ABC transporter domain. 35 to 42 (GPNGAGKS) serves as a coordination point for ATP.

This sequence belongs to the ABC transporter superfamily. In terms of assembly, the complex is composed of two ATP-binding proteins (BtuD), two transmembrane proteins (BtuC) and a solute-binding protein (BtuF).

Its subcellular location is the cell membrane. The catalysed reaction is an R-cob(III)alamin(out) + ATP + H2O = an R-cob(III)alamin(in) + ADP + phosphate + H(+). Required for corrinoid utilization. Probably part of the ABC transporter complex BtuCDF involved in cobalamin (vitamin B12) import. Probably responsible for energy coupling to the transport system. This is Cobalamin import ATP-binding protein BtuD (btuD) from Halobacterium salinarum (strain ATCC 29341 / DSM 671 / R1).